We begin with the raw amino-acid sequence, 147 residues long: NADH-quinone oxidoreductase subunit A (147 aa).

3 helical membrane-spanning segments follow: residues 11 to 31 (IWPLVAYFFLVVMLVVGVMAL), 68 to 88 (LIAVFFVIFDVEAVFLFAWAV), and 93 to 113 (LGWPGYIEAIIFISILGAALA).

The protein belongs to the complex I subunit 3 family. As to quaternary structure, NDH-1 is composed of 14 different subunits. Subunits NuoA, H, J, K, L, M, N constitute the membrane sector of the complex.

The protein localises to the cell inner membrane. The catalysed reaction is a quinone + NADH + 5 H(+)(in) = a quinol + NAD(+) + 4 H(+)(out). Functionally, NDH-1 shuttles electrons from NADH, via FMN and iron-sulfur (Fe-S) centers, to quinones in the respiratory chain. The immediate electron acceptor for the enzyme in this species is believed to be ubiquinone. Couples the redox reaction to proton translocation (for every two electrons transferred, four hydrogen ions are translocated across the cytoplasmic membrane), and thus conserves the redox energy in a proton gradient. This chain is NADH-quinone oxidoreductase subunit A, found in Nitrosospira multiformis (strain ATCC 25196 / NCIMB 11849 / C 71).